We begin with the raw amino-acid sequence, 485 residues long: MDEILKTRVKDLCEKIRSGQIKSIEIVKACFKRIKETDPKVKAFLKLNEERSLKQAAQSDDKIKTGAECGSLEGVPIGIKDNIMIKGESMTSASKYLENYISPYDAAVIEKLKEAGVIFVGRTNMDEFAMGGSTETSVYQKTANPWNIDYIPGGSSGGSAAAVSSGMVPFALGSDTGGSIRQPAGFCGIVGYKPSYGLISRYGACALASSFDQIGVFSKTVKDASLLTSFIAVGDYRDPVCETGEQTNYAHGIYNPDILKTVRIGIPKQLSNYKADEEITKYFGDAVNKLKLEGAATVEIDVPAYKYVPALYEVIMCAEVSANIATFDGIRYGYRSSNGRNLNDEYAKSRAESLGYEVKKRILFGTYVLGAKNYYRCYHQAQRVRTLLINQITDAYKKCDFIFSPATLQMPVKFGEKLSEECDIFLTAANLAGLPGITVPCTFTSSGMPMGVHFMGSRFSDAKLFQIADAFERISGFDINKYPNL.

Active-site charge relay system residues include K80 and S155. The Acyl-ester intermediate role is filled by S179.

Belongs to the amidase family. GatA subfamily. Heterotrimer of A, B and C subunits.

It catalyses the reaction L-glutamyl-tRNA(Gln) + L-glutamine + ATP + H2O = L-glutaminyl-tRNA(Gln) + L-glutamate + ADP + phosphate + H(+). In terms of biological role, allows the formation of correctly charged Gln-tRNA(Gln) through the transamidation of misacylated Glu-tRNA(Gln) in organisms which lack glutaminyl-tRNA synthetase. The reaction takes place in the presence of glutamine and ATP through an activated gamma-phospho-Glu-tRNA(Gln). This Endomicrobium trichonymphae protein is Glutamyl-tRNA(Gln) amidotransferase subunit A.